Consider the following 462-residue polypeptide: Argininosuccinate lyase (462 aa).

The protein belongs to the lyase 1 family. Argininosuccinate lyase subfamily.

Its subcellular location is the cytoplasm. The catalysed reaction is 2-(N(omega)-L-arginino)succinate = fumarate + L-arginine. Its pathway is amino-acid biosynthesis; L-arginine biosynthesis; L-arginine from L-ornithine and carbamoyl phosphate: step 3/3. This chain is Argininosuccinate lyase, found in Chloroflexus aggregans (strain MD-66 / DSM 9485).